The sequence spans 371 residues: Bifunctional enzyme IspD/IspF (371 aa).

Residues 1–212 (MLDISLIMLG…CLIPPSNEHF (212 aa)) are 2-C-methyl-D-erythritol 4-phosphate cytidylyltransferase. A 2-C-methyl-D-erythritol 2,4-cyclodiphosphate synthase region spans residues 212-371 (FTGIGFDAHE…ANLKYYDWTK (160 aa)). Aspartate 218 and histidine 220 together coordinate a divalent metal cation. Residues 218–220 (DAH) and 244–245 (HS) each bind 4-CDP-2-C-methyl-D-erythritol 2-phosphate. A divalent metal cation is bound at residue histidine 252. Residues 266–268 (DIG), 271–275 (FPDTD), 342–345 (TTTE), phenylalanine 349, and arginine 352 each bind 4-CDP-2-C-methyl-D-erythritol 2-phosphate.

In the N-terminal section; belongs to the IspD/TarI cytidylyltransferase family. IspD subfamily. This sequence in the C-terminal section; belongs to the IspF family. It depends on a divalent metal cation as a cofactor.

It carries out the reaction 2-C-methyl-D-erythritol 4-phosphate + CTP + H(+) = 4-CDP-2-C-methyl-D-erythritol + diphosphate. The catalysed reaction is 4-CDP-2-C-methyl-D-erythritol 2-phosphate = 2-C-methyl-D-erythritol 2,4-cyclic diphosphate + CMP. Its pathway is isoprenoid biosynthesis; isopentenyl diphosphate biosynthesis via DXP pathway; isopentenyl diphosphate from 1-deoxy-D-xylulose 5-phosphate: step 2/6. The protein operates within isoprenoid biosynthesis; isopentenyl diphosphate biosynthesis via DXP pathway; isopentenyl diphosphate from 1-deoxy-D-xylulose 5-phosphate: step 4/6. In terms of biological role, bifunctional enzyme that catalyzes the formation of 4-diphosphocytidyl-2-C-methyl-D-erythritol from CTP and 2-C-methyl-D-erythritol 4-phosphate (MEP) (IspD), and catalyzes the conversion of 4-diphosphocytidyl-2-C-methyl-D-erythritol 2-phosphate (CDP-ME2P) to 2-C-methyl-D-erythritol 2,4-cyclodiphosphate (ME-CPP) with a corresponding release of cytidine 5-monophosphate (CMP) (IspF). In Campylobacter curvus (strain 525.92), this protein is Bifunctional enzyme IspD/IspF.